The chain runs to 806 residues: DNA topoisomerase 1 (806 aa).

Over residues 1-15 (MSVVSNHHSNGNGNS) the composition is skewed to low complexity. Positions 1–236 (MSVVSNHHSN…KKEPPKKKVK (236 aa)) are disordered. A compositionally biased stretch (basic and acidic residues) spans 24-34 (DEIKKEVKDEP). Composition is skewed to basic residues over residues 49 to 60 (RDKKEKKQKKRK) and 98 to 108 (EKKKSKKNNKK). The span at 113–127 (SSEDDDEESEGDVSE) shows a compositional bias: acidic residues. The span at 128–137 (EDVKPQIHSD) shows a compositional bias: basic and acidic residues. Residues 138–153 (DELEEEDEAPTTDDEE) show a composition bias toward acidic residues. Basic residues predominate over residues 159-176 (EKERRKKEKREKKERKEK). Basic and acidic residues predominate over residues 177 to 188 (KRLEKENRKIKE). The segment covering 189-199 (EDDEDSDDEDD) has biased composition (acidic residues). Over residues 210-229 (KGAEKSKPSTSKKDAGGKKE) the composition is skewed to basic and acidic residues. 3 interaction with DNA regions span residues 467-468 (KY), 530-535 (RAGNEK), and 634-636 (TVK). One can recognise a Topo IB-type catalytic domain in the interval 474-803 (SSKIKGEKDF…IDMTNSSDEE (330 aa)). The active-site O-(3'-phospho-DNA)-tyrosine intermediate is the Tyr-761.

The protein belongs to the type IB topoisomerase family. In terms of tissue distribution, expressed in male germ cells and in mature sperm.

The protein localises to the nucleus. It localises to the nucleolus. The protein resides in the chromosome. The enzyme catalyses ATP-independent breakage of single-stranded DNA, followed by passage and rejoining.. Releases the supercoiling and torsional tension of DNA introduced during the DNA replication and transcription by transiently cleaving and rejoining one strand of the DNA duplex. Introduces a single-strand break via transesterification at a target site in duplex DNA. The scissile phosphodiester is attacked by the catalytic tyrosine of the enzyme, resulting in the formation of a DNA-(3'-phosphotyrosyl)-enzyme intermediate and the expulsion of a 5'-OH DNA strand. The free DNA strand then rotates around the intact phosphodiester bond on the opposing strand, thus removing DNA supercoils. Finally, in the religation step, the DNA 5'-OH attacks the covalent intermediate to expel the active-site tyrosine and restore the DNA phosphodiester backbone. Required for normal spermatogenesis and oogenesis. The polypeptide is DNA topoisomerase 1 (top-1) (Caenorhabditis elegans).